Reading from the N-terminus, the 268-residue chain is Methionine aminopeptidase (268 aa).

His-79 is a binding site for substrate. Asp-97, Asp-108, and His-172 together coordinate a divalent metal cation. Position 179 (His-179) interacts with substrate. A divalent metal cation contacts are provided by Glu-205 and Glu-236.

This sequence belongs to the peptidase M24A family. Methionine aminopeptidase type 1 subfamily. As to quaternary structure, monomer. Co(2+) serves as cofactor. The cofactor is Zn(2+). Mn(2+) is required as a cofactor. It depends on Fe(2+) as a cofactor.

The enzyme catalyses Release of N-terminal amino acids, preferentially methionine, from peptides and arylamides.. Removes the N-terminal methionine from nascent proteins. The N-terminal methionine is often cleaved when the second residue in the primary sequence is small and uncharged (Met-Ala-, Cys, Gly, Pro, Ser, Thr, or Val). Requires deformylation of the N(alpha)-formylated initiator methionine before it can be hydrolyzed. In Haemophilus influenzae (strain ATCC 51907 / DSM 11121 / KW20 / Rd), this protein is Methionine aminopeptidase.